Reading from the N-terminus, the 1400-residue chain is DNA-directed RNA polymerase subunit beta (1400 aa).

Belongs to the RNA polymerase beta chain family. The RNAP catalytic core consists of 2 alpha, 1 beta, 1 beta' and 1 omega subunit. When a sigma factor is associated with the core the holoenzyme is formed, which can initiate transcription.

The enzyme catalyses RNA(n) + a ribonucleoside 5'-triphosphate = RNA(n+1) + diphosphate. Its function is as follows. DNA-dependent RNA polymerase catalyzes the transcription of DNA into RNA using the four ribonucleoside triphosphates as substrates. This chain is DNA-directed RNA polymerase subunit beta, found in Acidiphilium cryptum (strain JF-5).